Consider the following 142-residue polypeptide: Hemoglobin subunit alpha-2 (142 aa).

Residues Val-2–Arg-142 form the Globin domain. Residue His-59 coordinates O2. A heme b-binding site is contributed by His-88.

It belongs to the globin family. Heterotetramer of two alpha chains and two beta chains. Red blood cells.

Functionally, involved in oxygen transport from the lung to the various peripheral tissues. The chain is Hemoglobin subunit alpha-2 from Arctocephalus galapagoensis (Galapagoes fur seal).